Reading from the N-terminus, the 515-residue chain is Tetratricopeptide repeat protein 8 (515 aa).

One copy of the TPR 1 repeat lies at 4 to 37; it reads EMEPLLRAWSYFRRRKFQLCADLCTQMLEKSPYD. 2 disordered regions span residues 89-109 and 118-137; these read RPGTSLKLPGTNQTGGPTQAV and PITGFLRPSTQSGRPGTMEQ. TPR repeat units follow at residues 225–258, 259–291, 292–325, 326–359, 360–393, 397–430, and 432–464; these read WWWKVQIGKCYYRLGMYREAEKQFKSALKQQEMV, DTFLYLAKVYIILDQPVTALNLFKQGLDKFPGE, VTLLCGIARIYEEMNNSSSAAEYYKEVLKQDNTH, VEAIACIGSNHFYSDQPEVALRFYRRLLQMGVYN, CQLFNNLGLCCFYAQQYDMTLTSFERALSLAENE, ADVWYNLGHIAVGIGDTNLAHQCFRLALVHNNHH, and EAYNNLAVLEMRKGHVEQARALLQTASSLAPHM.

In terms of assembly, part of BBSome complex, that contains BBS1, BBS2, BBS4, BBS5, BBS7, BBS8/TTC8, BBS9 and BBIP10. Interacts with PCM1. Interacts with CCDC28B. Interacts with PKD1. As to expression, isoform 1 is retina-specific whereas isoform 2 is ubiquitously expressed.

The protein resides in the cytoplasm. It localises to the cytoskeleton. It is found in the microtubule organizing center. Its subcellular location is the centrosome. The protein localises to the centriole. The protein resides in the cell projection. It localises to the cilium membrane. It is found in the centriolar satellite. Its subcellular location is the cilium. Functionally, the BBSome complex is thought to function as a coat complex required for sorting of specific membrane proteins to the primary cilia. The BBSome complex is required for ciliogenesis but is dispensable for centriolar satellite function. This ciliogenic function is mediated in part by the Rab8 GDP/GTP exchange factor, which localizes to the basal body and contacts the BBSome. Rab8(GTP) enters the primary cilium and promotes extension of the ciliary membrane. Firstly the BBSome associates with the ciliary membrane and binds to RAB3IP/Rabin8, the guanosyl exchange factor (GEF) for Rab8 and then the Rab8-GTP localizes to the cilium and promotes docking and fusion of carrier vesicles to the base of the ciliary membrane. The BBSome complex, together with the LTZL1, controls SMO ciliary trafficking and contributes to the sonic hedgehog (SHH) pathway regulation. Required for proper BBSome complex assembly and its ciliary localization. In Mus musculus (Mouse), this protein is Tetratricopeptide repeat protein 8 (Ttc8).